Here is a 502-residue protein sequence, read N- to C-terminus: Cytochrome P450 71B20 (502 aa).

A helical membrane pass occupies residues 1–21 (MAISFLCFCLITLASLIFFAK). Cys-444 lines the heme pocket.

It belongs to the cytochrome P450 family. It depends on heme as a cofactor.

It is found in the membrane. This is Cytochrome P450 71B20 (CYP71B20) from Arabidopsis thaliana (Mouse-ear cress).